The following is a 558-amino-acid chain: MASLVSGDKEAQISGDPGSKRGGWITFPFMLATLLGLSVTSFGWVMNLIVFLIEEFNIKSIAAAQISNVANGCLSMLPVVAAILADSFFGNIPVIAASSFISLLGIVLLTLIASLDYLRPRPCEAGSVLCTPPSKLHLGILYTALALVTTGAGGTRFTMASAGANQYEKPKEQGSFFNWYFLTLYAGAITGATAIVYIQDNASWKLGFGLCAAANLISFIVFVSGKRYYKHDKPMGSPFTSLIRVVVSATVKRKAVISCNEEDYHHYGLEKEVKTSAAMPSKSFRFLNRAALMTKDDLNQKEGSVNNIWRLCSVQEVEDFKAILRVFPLWLSIIFVSTPMVMQTSLIVLQALVTDRGLGPNFKVPAGSLQVIIIITACIVIIMNNWLVFPMYKKLTHKLLTPLQKVGIGQVLTILSMALSAVVEAKRLKTVENGHPMSVLWLFPPLVIVGIGEAFQFPANIELFYGEFPESLRNTATSLTSVVIGISFYLSTALIDLIQRTTAWLPNDINHGRVDNVYWLLVIGGILNFGYFLVCSWVYKYRNLKDNDQEQDPKDGTM.

Transmembrane regions (helical) follow at residues 33–53 (TLLGLSVTSFGWVMNLIVFLI), 69–89 (VANGCLSMLPVVAAILADSFF), 92–112 (IPVIAASSFISLLGIVLLTLI), 128–148 (VLCTPPSKLHLGILYTALALV), 176–196 (FFNWYFLTLYAGAITGATAIV), 203–223 (SWKLGFGLCAAANLISFIVFV), 329–349 (LWLSIIFVSTPMVMQTSLIVL), 371–391 (VIIIITACIVIIMNNWLVFPM), 403–423 (LQKVGIGQVLTILSMALSAVV), 439–459 (VLWLFPPLVIVGIGEAFQFPA), 478–498 (SLTSVVIGISFYLSTALIDLI), and 517–537 (VYWLLVIGGILNFGYFLVCSW).

This sequence belongs to the major facilitator superfamily. Proton-dependent oligopeptide transporter (POT/PTR) (TC 2.A.17) family. In terms of tissue distribution, expressed in flowers, siliques and root epidermis or cortex. Detected in shoots.

It is found in the membrane. Transporter involved in a passive nitrate efflux. The sequence is that of Protein NRT1/ PTR FAMILY 2.3 (NPF2.3) from Arabidopsis thaliana (Mouse-ear cress).